A 240-amino-acid chain; its full sequence is Mitochondrial transcription rescue factor 1 (240 aa).

A mitochondrion-targeting transit peptide spans 1-83 (MAVPGVRLLT…ECYFPFSIRL (83 aa)). The segment at 92–127 (STKKTLQKEADEEDSDEETSYPERSEQEEELESEPG) is disordered. A compositionally biased stretch (acidic residues) spans 101–124 (ADEEDSDEETSYPERSEQEEELES). Residues Ser106 and Ser116 each carry the phosphoserine modification. Positions 142–217 (FRYDVILKTG…LKKVYEEKTE (76 aa)) constitute an S4 RNA-binding domain.

As to quaternary structure, monomer. Interacts with POLRMT. Interacts (via S4 domain) with MTRFR (via C-terminus). Associates with mitoribosomal S39 large subunit, peptidyl tRNA and nascent chain.

The protein localises to the mitochondrion matrix. Mitochondrial RNA-binding protein involved in mitochondrial transcription regulation. Functions as a protective factor to maintain proper mitochondrial RNA level during stress. Acts at the transcription level and its protective function depends on its RNA binding ability. Part of a mitoribosome-associated quality control pathway that prevents aberrant translation by responding to interruptions during elongation. As heterodimer with MTRF, ejects the unfinished nascent chain and peptidyl transfer RNA (tRNA), respectively, from stalled ribosomes. Recruitment of mitoribosome biogenesis factors to these quality control intermediates suggests additional roles for MTRES1 and MTRF during mitoribosome rescue. This chain is Mitochondrial transcription rescue factor 1 (Mtres1), found in Mus musculus (Mouse).